The sequence spans 370 residues: Cyanuric acid amidohydrolase (370 aa).

The interval 1–103 (MQAQVFRVPM…TIFTVQKTDN (103 aa)) is RU A. Residues Arg-51 and 82 to 83 (SG) contribute to the substrate site. The tract at residues 113-250 (RLAVQQIFTR…NEIIVMGNSR (138 aa)) is RU B. Residue Lys-163 is part of the active site. Residues Arg-195 and 233-234 (SA) each bind substrate. Ser-233 acts as the Nucleophile in catalysis. Residues 256 to 370 (LVIGHAEMKD…GPVAVIARTA (115 aa)) are RU C. Glu-303 is a Mg(2+) binding site. Substrate contacts are provided by residues Arg-330 and 349–350 (SG). Ser-352, Gln-355, Gly-356, Pro-357, and Gly-360 together coordinate Mg(2+).

The protein belongs to the cyclic amide hydrolase (CyAH) family. As to quaternary structure, homotetramer.

It catalyses the reaction cyanurate + H2O = 1-carboxybiuret + H(+). It functions in the pathway xenobiotic degradation; atrazine degradation; biuret from cyanurate: step 1/1. Inhibited by barbituric acid. Its function is as follows. Responsible for the hydrolysis of cyanuric acid, an intermediate formed during catabolism of s-triazine based compounds in herbicides such as atrazine and polymers such as melamine. Catalyzes the hydrolytic opening of the s-triazine ring of cyanuric acid (2,4,6-trihydroxy-s-triazine) to yield carbon dioxide and carboxybiuret, which spontaneously decarboxylates to biuret. The protein is Cyanuric acid amidohydrolase (trzD) of Pseudomonas sp.